Here is a 288-residue protein sequence, read N- to C-terminus: 4-diphosphocytidyl-2-C-methyl-D-erythritol kinase (288 aa).

Residue Lys11 is part of the active site. Position 93-103 (Pro93–Ser103) interacts with ATP. Asp135 is a catalytic residue.

Belongs to the GHMP kinase family. IspE subfamily.

The catalysed reaction is 4-CDP-2-C-methyl-D-erythritol + ATP = 4-CDP-2-C-methyl-D-erythritol 2-phosphate + ADP + H(+). The protein operates within isoprenoid biosynthesis; isopentenyl diphosphate biosynthesis via DXP pathway; isopentenyl diphosphate from 1-deoxy-D-xylulose 5-phosphate: step 3/6. Its function is as follows. Catalyzes the phosphorylation of the position 2 hydroxy group of 4-diphosphocytidyl-2C-methyl-D-erythritol. The sequence is that of 4-diphosphocytidyl-2-C-methyl-D-erythritol kinase from Chlorobium limicola (strain DSM 245 / NBRC 103803 / 6330).